The sequence spans 360 residues: Photosystem II protein D1 (360 aa).

3 helical membrane passes run 30-47 (YVGW…AAAI), 119-134 (HFLI…QWEL), and 143-157 (WICV…AAFA). Position 119 (His-119) interacts with chlorophyll a. Trp-127 is a pheophytin a binding site. Asp-171 and Glu-190 together coordinate [CaMn4O5] cluster. The chain crosses the membrane as a helical span at residues 198–219 (FHMAGVAGMFGGSLFSAMHGSL). His-199 serves as a coordination point for chlorophyll a. A quinone is bound by residues His-216 and 265 to 266 (SF). His-216 provides a ligand contact to Fe cation. His-273 contacts Fe cation. A helical membrane pass occupies residues 275-289 (FLAIFPVVCVWLTSM). [CaMn4O5] cluster-binding residues include His-333, Glu-334, Asp-343, and Ala-345. A propeptide spanning residues 346–360 (AAESTSVALVAPSIG) is cleaved from the precursor.

This sequence belongs to the reaction center PufL/M/PsbA/D family. PSII is composed of 1 copy each of membrane proteins PsbA, PsbB, PsbC, PsbD, PsbE, PsbF, PsbH, PsbI, PsbJ, PsbK, PsbL, PsbM, PsbT, PsbX, PsbY, Psb30/Ycf12, peripheral proteins PsbO, CyanoQ (PsbQ), PsbU, PsbV and a large number of cofactors. It forms dimeric complexes. Requires The D1/D2 heterodimer binds P680, chlorophylls that are the primary electron donor of PSII, and subsequent electron acceptors. It shares a non-heme iron and each subunit binds pheophytin, quinone, additional chlorophylls, carotenoids and lipids. D1 provides most of the ligands for the Mn4-Ca-O5 cluster of the oxygen-evolving complex (OEC). There is also a Cl(-1) ion associated with D1 and D2, which is required for oxygen evolution. The PSII complex binds additional chlorophylls, carotenoids and specific lipids. as cofactor. Tyr-162 forms a radical intermediate that is referred to as redox-active TyrZ, YZ or Y-Z. Post-translationally, C-terminally processed by CtpA; processing is essential to allow assembly of the oxygen-evolving complex and thus photosynthetic growth.

It localises to the cellular thylakoid membrane. The enzyme catalyses 2 a plastoquinone + 4 hnu + 2 H2O = 2 a plastoquinol + O2. Its function is as follows. Photosystem II (PSII) is a light-driven water:plastoquinone oxidoreductase that uses light energy to abstract electrons from H(2)O, generating O(2) and a proton gradient subsequently used for ATP formation. It consists of a core antenna complex that captures photons, and an electron transfer chain that converts photonic excitation into a charge separation. The D1/D2 (PsbA/PsbD) reaction center heterodimer binds P680, the primary electron donor of PSII as well as several subsequent electron acceptors. This Prochlorococcus marinus (strain SARG / CCMP1375 / SS120) protein is Photosystem II protein D1.